Here is an 865-residue protein sequence, read N- to C-terminus: Leucine--tRNA ligase (865 aa).

A 'HIGH' region motif is present at residues 44 to 54 (PYPSGRIHVGH). Positions 625–629 (KMSKS) match the 'KMSKS' region motif. Lys-628 is a binding site for ATP.

This sequence belongs to the class-I aminoacyl-tRNA synthetase family.

The protein localises to the cytoplasm. The enzyme catalyses tRNA(Leu) + L-leucine + ATP = L-leucyl-tRNA(Leu) + AMP + diphosphate. The polypeptide is Leucine--tRNA ligase (Maricaulis maris (strain MCS10) (Caulobacter maris)).